The following is a 147-amino-acid chain: Hemoglobin subunit beta (147 aa).

An N-acetylvaline modification is found at V2. A Globin domain is found at 3-147; it reads HLSGEEKSAV…VANALAHKYH (145 aa). T13 is modified (phosphothreonine). S45 carries the phosphoserine modification. K60 carries the post-translational modification N6-acetyllysine. H64 contributes to the heme b binding site. Position 83 is an N6-acetyllysine (K83). Residue H93 coordinates heme b. C94 bears the S-nitrosocysteine mark. Position 145 is an N6-acetyllysine (K145).

It belongs to the globin family. In terms of assembly, heterotetramer of two alpha chains and two beta chains. Red blood cells.

In terms of biological role, involved in oxygen transport from the lung to the various peripheral tissues. The chain is Hemoglobin subunit beta (HBB) from Lepus europaeus (European hare).